Here is a 515-residue protein sequence, read N- to C-terminus: Glucose-6-phosphate 1-dehydrogenase (515 aa).

The NADP(+) site is built by arginine 53 and lysine 160. The substrate site is built by histidine 190, lysine 194, glutamate 228, and aspartate 247. Catalysis depends on histidine 252, which acts as the Proton acceptor. Lysine 352 lines the substrate pocket.

This sequence belongs to the glucose-6-phosphate dehydrogenase family.

The catalysed reaction is D-glucose 6-phosphate + NADP(+) = 6-phospho-D-glucono-1,5-lactone + NADPH + H(+). It participates in carbohydrate degradation; pentose phosphate pathway; D-ribulose 5-phosphate from D-glucose 6-phosphate (oxidative stage): step 1/3. Functionally, catalyzes the oxidation of glucose 6-phosphate to 6-phosphogluconolactone. The chain is Glucose-6-phosphate 1-dehydrogenase from Treponema pallidum (strain Nichols).